A 562-amino-acid polypeptide reads, in one-letter code: Dihydroxy-acid dehydratase 2 (562 aa).

C50 contributes to the [2Fe-2S] cluster binding site. Residue D82 coordinates Mg(2+). Position 123 (C123) interacts with [2Fe-2S] cluster. The Mg(2+) site is built by D124, K125, and E447. At K125 the chain carries N6-carboxylysine. The Proton acceptor role is filled by S473.

Belongs to the IlvD/Edd family. As to quaternary structure, homodimer. It depends on [2Fe-2S] cluster as a cofactor. Mg(2+) serves as cofactor.

It carries out the reaction (2R)-2,3-dihydroxy-3-methylbutanoate = 3-methyl-2-oxobutanoate + H2O. The enzyme catalyses (2R,3R)-2,3-dihydroxy-3-methylpentanoate = (S)-3-methyl-2-oxopentanoate + H2O. Its pathway is amino-acid biosynthesis; L-isoleucine biosynthesis; L-isoleucine from 2-oxobutanoate: step 3/4. The protein operates within amino-acid biosynthesis; L-valine biosynthesis; L-valine from pyruvate: step 3/4. Functions in the biosynthesis of branched-chain amino acids. Catalyzes the dehydration of (2R,3R)-2,3-dihydroxy-3-methylpentanoate (2,3-dihydroxy-3-methylvalerate) into 2-oxo-3-methylpentanoate (2-oxo-3-methylvalerate) and of (2R)-2,3-dihydroxy-3-methylbutanoate (2,3-dihydroxyisovalerate) into 2-oxo-3-methylbutanoate (2-oxoisovalerate), the penultimate precursor to L-isoleucine and L-valine, respectively. This chain is Dihydroxy-acid dehydratase 2, found in Bordetella pertussis (strain Tohama I / ATCC BAA-589 / NCTC 13251).